The primary structure comprises 562 residues: Eukaryotic translation initiation factor 3 subunit L (562 aa).

Residues 329-535 form the PCI domain; the sequence is DAIRVFANIL…IHIADTKVAR (207 aa).

This sequence belongs to the eIF-3 subunit L family. In terms of assembly, component of the eukaryotic translation initiation factor 3 (eIF-3) complex, which is composed of 13 subunits: eif3a, eif3b, eif3c, eif3d, eif3e, eif3f, eif3g, eif3h, eif3i, eif3j, eif3k, eif3l and eif3m.

The protein localises to the cytoplasm. In terms of biological role, component of the eukaryotic translation initiation factor 3 (eIF-3) complex, which is involved in protein synthesis of a specialized repertoire of mRNAs and, together with other initiation factors, stimulates binding of mRNA and methionyl-tRNAi to the 40S ribosome. The eIF-3 complex specifically targets and initiates translation of a subset of mRNAs involved in cell proliferation. The chain is Eukaryotic translation initiation factor 3 subunit L (eif3l) from Xenopus tropicalis (Western clawed frog).